The sequence spans 360 residues: Holliday junction branch migration complex subunit RuvB (360 aa).

The segment at 1–23 (MIASVGDSRYYPKSVANGEKSDQ) is disordered. The interval 12–204 (PKSVANGEKS…FGIVLRLEFY (193 aa)) is large ATPase domain (RuvB-L). ATP contacts are provided by residues Leu43, Arg44, Gly85, Lys88, Thr89, Thr90, 151–153 (EDY), Arg194, Tyr204, and Arg241. Thr89 contributes to the Mg(2+) binding site. The interval 205 to 275 (TTEDLKIILK…TAQKALEMLE (71 aa)) is small ATPAse domain (RuvB-S). The interval 278-360 (QHGFDEVDRR…KPPKKQDSLF (83 aa)) is head domain (RuvB-H). DNA contacts are provided by Arg333 and Arg338.

Belongs to the RuvB family. In terms of assembly, homohexamer. Forms an RuvA(8)-RuvB(12)-Holliday junction (HJ) complex. HJ DNA is sandwiched between 2 RuvA tetramers; dsDNA enters through RuvA and exits via RuvB. An RuvB hexamer assembles on each DNA strand where it exits the tetramer. Each RuvB hexamer is contacted by two RuvA subunits (via domain III) on 2 adjacent RuvB subunits; this complex drives branch migration. In the full resolvosome a probable DNA-RuvA(4)-RuvB(12)-RuvC(2) complex forms which resolves the HJ.

The protein localises to the cytoplasm. The catalysed reaction is ATP + H2O = ADP + phosphate + H(+). Its function is as follows. The RuvA-RuvB-RuvC complex processes Holliday junction (HJ) DNA during genetic recombination and DNA repair, while the RuvA-RuvB complex plays an important role in the rescue of blocked DNA replication forks via replication fork reversal (RFR). RuvA specifically binds to HJ cruciform DNA, conferring on it an open structure. The RuvB hexamer acts as an ATP-dependent pump, pulling dsDNA into and through the RuvAB complex. RuvB forms 2 homohexamers on either side of HJ DNA bound by 1 or 2 RuvA tetramers; 4 subunits per hexamer contact DNA at a time. Coordinated motions by a converter formed by DNA-disengaged RuvB subunits stimulates ATP hydrolysis and nucleotide exchange. Immobilization of the converter enables RuvB to convert the ATP-contained energy into a lever motion, pulling 2 nucleotides of DNA out of the RuvA tetramer per ATP hydrolyzed, thus driving DNA branch migration. The RuvB motors rotate together with the DNA substrate, which together with the progressing nucleotide cycle form the mechanistic basis for DNA recombination by continuous HJ branch migration. Branch migration allows RuvC to scan DNA until it finds its consensus sequence, where it cleaves and resolves cruciform DNA. This chain is Holliday junction branch migration complex subunit RuvB, found in Koribacter versatilis (strain Ellin345).